A 386-amino-acid polypeptide reads, in one-letter code: Mannitol-1-phosphate 5-dehydrogenase (386 aa).

4-15 provides a ligand contact to NAD(+); it reads AIHFGGGNIGRG. The active site involves lysine 211.

Belongs to the mannitol dehydrogenase family. Monomer.

It catalyses the reaction D-mannitol 1-phosphate + NAD(+) = beta-D-fructose 6-phosphate + NADH + H(+). Its function is as follows. Catalyzes the NAD(H)-dependent interconversion of D-fructose 6-phosphate and D-mannitol 1-phosphate in the mannitol metabolic pathway. The protein is Mannitol-1-phosphate 5-dehydrogenase (mpdA) of Emericella nidulans (strain FGSC A4 / ATCC 38163 / CBS 112.46 / NRRL 194 / M139) (Aspergillus nidulans).